Here is a 247-residue protein sequence, read N- to C-terminus: Protein At-4/1 (247 aa).

Coiled-coil stretches lie at residues 39–126 (VESS…YKIR) and 182–247 (LLME…LSSS).

Interacts with viral tomato spotted wilt virus (TSWV) movement protein NSM, which is involved in cell-to cell spread of viral genome and enlargement of the host plasmodesmata size exclusion limit (SEL). As to expression, expressed in leaves (at protein level).

Its subcellular location is the endoplasmic reticulum. It localises to the cell junction. The protein localises to the plasmodesma. Functionally, involved in intra- and inter-cellular trafficking through plasmodesmata (PD). This chain is Protein At-4/1, found in Arabidopsis thaliana (Mouse-ear cress).